The primary structure comprises 415 residues: Imidazolonepropionase (415 aa).

The Fe(3+) site is built by His-83 and His-85. The Zn(2+) site is built by His-83 and His-85. 3 residues coordinate 4-imidazolone-5-propanoate: Arg-92, Tyr-155, and His-188. Residue Tyr-155 participates in N-formimidoyl-L-glutamate binding. His-250 is a binding site for Fe(3+). His-250 contacts Zn(2+). Residue Gln-253 participates in 4-imidazolone-5-propanoate binding. Asp-324 is a binding site for Fe(3+). Residue Asp-324 coordinates Zn(2+). Asn-326 and Gly-328 together coordinate N-formimidoyl-L-glutamate. A 4-imidazolone-5-propanoate-binding site is contributed by Ser-329.

The protein belongs to the metallo-dependent hydrolases superfamily. HutI family. The cofactor is Zn(2+). Fe(3+) serves as cofactor.

It localises to the cytoplasm. It catalyses the reaction 4-imidazolone-5-propanoate + H2O = N-formimidoyl-L-glutamate. It functions in the pathway amino-acid degradation; L-histidine degradation into L-glutamate; N-formimidoyl-L-glutamate from L-histidine: step 3/3. Its function is as follows. Catalyzes the hydrolytic cleavage of the carbon-nitrogen bond in imidazolone-5-propanoate to yield N-formimidoyl-L-glutamate. It is the third step in the universal histidine degradation pathway. The polypeptide is Imidazolonepropionase (Rubrobacter xylanophilus (strain DSM 9941 / JCM 11954 / NBRC 16129 / PRD-1)).